The chain runs to 426 residues: MKHLTEMVRQHKAGKTNGIYAVCSAHPLVLEAAIRYASANQTPLLIEATSNQVDQFGGYTGMTPADFRGFVCQLADSLNFPQDALILGGDHLGPNRWQNLPAAQAMANADDLIKSYVAAGFKKIHLDCSMSCQDDPVPLTDDIVAERAARLAKVAEETCREHFGEADLVYVIGTEVPVPGGAHETLSELAVTTPDAARATLEAHRHAFEKQGLSAIWPRIIALVVQPGVEFDHTNVIDYQPVKATALSQMVENYETLIFEAHSTDYQTPQSLRQLVIDHFAILKVGPALTFALREALFSLAAIEEELVPAKACSGLRQVLENVMLDRPEYWQSHYHGDGNARRLARGYSYSDRVRYYWPDSQIDDAFAHLVRNLADSPIPLPLISQYLPLQYVKVRSGELQPTPRELIINHIQDILAQYHTACEGQ.

It belongs to the GatZ/KbaZ family. KbaZ subfamily. Forms a complex with KbaY.

It functions in the pathway carbohydrate metabolism; D-tagatose 6-phosphate degradation; D-glyceraldehyde 3-phosphate and glycerone phosphate from D-tagatose 6-phosphate: step 2/2. Its function is as follows. Component of the tagatose-1,6-bisphosphate aldolase KbaYZ that is required for full activity and stability of the Y subunit. Could have a chaperone-like function for the proper and stable folding of KbaY. When expressed alone, KbaZ does not show any aldolase activity. The polypeptide is D-tagatose-1,6-bisphosphate aldolase subunit KbaZ (Escherichia coli O17:K52:H18 (strain UMN026 / ExPEC)).